We begin with the raw amino-acid sequence, 956 residues long: Thrombospondin-3 (956 aa).

The signal sequence occupies residues 1 to 22 (METQELRGALALLLLCFFTSAS). Residues 23–193 (QDLQVIDLLT…VESMKIILGG (171 aa)) form the Laminin G-like domain. Intrachain disulfides connect Cys-278–Cys-289, Cys-283–Cys-300, Cys-303–Cys-314, Cys-320–Cys-332, Cys-326–Cys-341, Cys-344–Cys-368, Cys-374–Cys-388, Cys-382–Cys-397, Cys-400–Cys-412, Cys-418–Cys-432, Cys-426–Cys-442, Cys-444–Cys-455, Cys-471–Cys-478, Cys-483–Cys-503, Cys-519–Cys-539, Cys-542–Cys-562, Cys-578–Cys-598, Cys-601–Cys-621, Cys-639–Cys-659, Cys-679–Cys-699, and Cys-715–Cys-936. Asn-310 is a glycosylation site (N-linked (GlcNAc...) asparagine). In terms of domain architecture, EGF-like 1; calcium-binding spans 316 to 354 (DINECAHADPCFPGSSCINTMPGFHCEACPRGYKGTQVS). The region spanning 370–410 (DIDECNDGNNGGCDPNSICTNTVGSFKCGPCRLGFLGNQSQ) is the EGF-like 2; calcium-binding domain. N-linked (GlcNAc...) asparagine glycosylation occurs at Asn-407. Positions 414-456 (PARTCHSPAHSPCHIHAHCLFERNGAVSCQCNVGWAGNGNVCG) constitute an EGF-like 3 domain. TSP type-3 repeat units lie at residues 457–491 (TDTD…NSGQ), 492–527 (EDAD…NKDQ), 528–550 (QNSD…NNDQ), 551–586 (KDTD…NPLQ), 587–609 (TDRD…NPTQ), 610–647 (TDAD…NSSQ), 648–687 (LDSD…NPNQ), and 688–723 (KDSD…EVTL). 2 disordered regions span residues 518 to 537 (NCRL…SFGD) and 546 to 702 (PNND…CEDD). Residues 555 to 568 (GNGEGDACDNDVDG) show a composition bias toward acidic residues. Over residues 612–628 (ADSDLVGDVCDTNEDSD) the composition is skewed to acidic residues. The N-linked (GlcNAc...) asparagine glycan is linked to Asn-644. The segment covering 650-667 (SDNDGLGDECDGDDDNDG) has biased composition (acidic residues). In terms of domain architecture, TSP C-terminal spans 727 to 941 (RAYQTVVLDP…LQYRCNDTVP (215 aa)). Residue Asn-937 is glycosylated (N-linked (GlcNAc...) asparagine).

It belongs to the thrombospondin family. As to quaternary structure, oligomer; disulfide-linked.

Adhesive glycoprotein that mediates cell-to-cell and cell-to-matrix interactions. Can bind to fibrinogen, fibronectin, laminin and type V collagen. This Homo sapiens (Human) protein is Thrombospondin-3 (THBS3).